The sequence spans 962 residues: Oncostatin-M-specific receptor subunit beta (962 aa).

The signal sequence occupies residues 1–28 (MAFSVVLHQVTFLLAVLSLRTSQSKVLG). Topologically, residues 29–738 (EPLQLTPEIH…VTTPDVRSHM (710 aa)) are extracellular. N-linked (GlcNAc...) asparagine glycosylation occurs at Asn219. 5 consecutive Fibronectin type-III domains span residues 237-332 (EPKN…VHPK), 333-426 (APHD…TPEA), 428-527 (PSEA…SGHE), 528-621 (EVHE…TQEL), and 623-734 (PSVN…TPDV). The cysteines at positions 243 and 253 are disulfide-linked. Asn324 is a glycosylation site (N-linked (GlcNAc...) asparagine). A WSXWS motif motif is present at residues 413-417 (WSDWM). Residues Asn492, Asn578, and Asn723 are each glycosylated (N-linked (GlcNAc...) asparagine). Residues 739–759 (LLQIILPMTLGVFLSIIVCYW) traverse the membrane as a helical segment. The Cytoplasmic segment spans residues 760–962 (KSQWVKEKCY…ASLKENNLTS (203 aa)). The short motif at 768-776 (CYPDIPNPY) is the Box 1 motif element. Positions 818–840 (VGSGKLHTEDVPTKPPLVPTEKD) are disordered.

Belongs to the type I cytokine receptor family. Type 2 subfamily. In terms of assembly, heterodimer composed of OSMR and IL6ST (type II OSM receptor). Heterodimer with IL31RA to form the IL31 receptor. As to expression, widely expressed. Expressed at high levels in the liver, skin and spleen. In the liver it is expressed exclusively in the oval cells.

The protein resides in the membrane. Its function is as follows. Associates with IL31RA to form the IL31 receptor. Binds IL31 and activates STAT1, STAT3 and STAT5. Capable of transducing OSM-specific signaling events. The OSM/OSM-R system is pivotal in the differentiation of oval cells into hepatocytes, thereby promoting liver regeneration. In Rattus norvegicus (Rat), this protein is Oncostatin-M-specific receptor subunit beta (Osmr).